A 143-amino-acid chain; its full sequence is Large ribosomal subunit protein uL11 (143 aa).

Belongs to the universal ribosomal protein uL11 family. In terms of assembly, part of the ribosomal stalk of the 50S ribosomal subunit. Interacts with L10 and the large rRNA to form the base of the stalk. L10 forms an elongated spine to which L12 dimers bind in a sequential fashion forming a multimeric L10(L12)X complex. Post-translationally, one or more lysine residues are methylated.

Functionally, forms part of the ribosomal stalk which helps the ribosome interact with GTP-bound translation factors. The sequence is that of Large ribosomal subunit protein uL11 from Borreliella afzelii (strain PKo) (Borrelia afzelii).